The primary structure comprises 457 residues: PDZ and LIM domain protein 7 (457 aa).

One can recognise a PDZ domain in the interval 1 to 85 (MDSFKVVLEG…RLSLGLSRAQ (85 aa)). Ser-78 bears the Phosphoserine mark. Disordered regions lie at residues 82-166 (SRAQ…QSRS) and 186-226 (FMKK…PWAV). Thr-96 is subject to Phosphothreonine. At Arg-103 the chain carries Asymmetric dimethylarginine. Ser-111 carries the post-translational modification Phosphoserine. Positions 126 to 135 (DSTLRQNGQL) are enriched in polar residues. Positions 144–157 (SKQRLMEDTEDWRP) are enriched in basic and acidic residues. Residue Ser-247 is modified to Phosphoserine. LIM zinc-binding domains lie at 280–338 (PVCH…VRYA), 339–398 (PNCA…MFGT), and 399–457 (KCRG…FSHV).

As to quaternary structure, specifically binds via its LIM zinc-binding 3 domain (LIM 3) domain to endocytic codes of INSR, but not with those of IGF1R, LDLR, TFRC, or EGFR. Interacts with various PKC isoforms through the LIM zinc-binding domains. Binds to RET in a phosphorylation-independent manner via its LIM zinc-binding domain 2 (LIM 2). Probably part of a complex with SHC and the RET dimer. Interacts with TPM2, TBX4 and TBX5.

The protein resides in the cytoplasm. The protein localises to the cytoskeleton. Its function is as follows. May function as a scaffold on which the coordinated assembly of proteins can occur. May play a role as an adapter that, via its PDZ domain, localizes LIM-binding proteins to actin filaments of both skeletal muscle and nonmuscle tissues. Involved in both of the two fundamental mechanisms of bone formation, direct bone formation (e.g. embryonic flat bones mandible and cranium), and endochondral bone formation (e.g. embryonic long bone development). Plays a role during fracture repair. Involved in BMP6 signaling pathway. The polypeptide is PDZ and LIM domain protein 7 (Pdlim7) (Mus musculus (Mouse)).